A 133-amino-acid polypeptide reads, in one-letter code: Protein OPG104 (133 aa).

The Virion surface segment spans residues 1–111; sequence MTDEQIYAFC…RYLNQEIRYP (111 aa). The helical; Signal-anchor transmembrane segment at 112–132 threads the bilayer; that stretch reads IIDIKWLPIGLLALAILILAF.

This sequence belongs to the orthopoxvirus OPG104 family. In terms of assembly, part of a stable entry-fusion complex (EFC) which is at least composed of proteins OPG143, OPG147, OPG155, OPG086, OPG094, OPG107, OPG104, and OPG099. Formation of the viral membrane is necessary for the assembly of the complex.

It is found in the virion membrane. Its function is as follows. Envelope protein part of the entry-fusion complex responsible for the virus membrane fusion with host cell membrane during virus entry. Also plays a role in cell-cell fusion (syncytium formation). The protein is Protein OPG104 (OPG104) of Homo sapiens (Human).